Here is a 68-residue protein sequence, read N- to C-terminus: Beta-defensin 1 (68 aa).

The first 21 residues, M1–G21, serve as a signal peptide directing secretion. The propeptide occupies D22–S32. Cystine bridges form between C37–C66, C44–C59, and C49–C67.

This sequence belongs to the beta-defensin family. Monomer. Homodimer.

The protein resides in the secreted. The protein localises to the membrane. In terms of biological role, has bactericidal activity. May act as a ligand for C-C chemokine receptor CCR6. Positively regulates the sperm motility and bactericidal activity in a CCR6-dependent manner. Binds to CCR6 and triggers Ca2+ mobilization in the sperm which is important for its motility. This chain is Beta-defensin 1 (DEFB1), found in Presbytis melalophos (Mitred leaf monkey).